Reading from the N-terminus, the 901-residue chain is ABC transporter A family member 8 (901 aa).

The next 7 helical transmembrane spans lie at 34–54 (LITI…LFDT), 315–335 (IASL…FPVI), 369–389 (FLLI…LIGL), 402–422 (VFFF…SAMF), 427–447 (TATV…IFLF), 460–477 (WIIA…RGLY), and 508–528 (CIML…DQII). In terms of domain architecture, ABC transporter spans 586-823 (VLCNNLKKVY…YGGSYVLTVT (238 aa)). Residue 624–631 (GPNGAGKT) participates in ATP binding.

Belongs to the ABC transporter superfamily. ABCA family. CPR flippase (TC 3.A.1.211) subfamily.

Its subcellular location is the membrane. The sequence is that of ABC transporter A family member 8 (ABCA8) from Arabidopsis thaliana (Mouse-ear cress).